The chain runs to 673 residues: F-box/LRR-repeat protein 17 (673 aa).

Positions 1–39 (MGHVAPHASKKEHVAPHAAEKDHVAPHASKKEHVAPHAA) are disordered. Basic and acidic residues predominate over residues 9 to 39 (SKKEHVAPHAAEKDHVAPHASKKEHVAPHAA). Positions 291–338 (PLHINQLPSSLLLKIFSNLSLNERCILASLVCKYWRDLCLDSQFWKQL) constitute an F-box domain.

It belongs to the FBXL17 family. In terms of assembly, part of the SCF (SKP1-CUL1-F-box) E3 ubiquitin-protein ligase complex SCF(FBXL17). Interacts with BTB domain-containing proteins; specifically recognizes and binds a conserved degron of non-consecutive residues present at the interface of BTB dimers of aberrant composition. Expressed in the neuro-ectoderm of embryos.

It is found in the cytoplasm. It localises to the nucleus. Its function is as follows. Substrate-recognition component of the SCF(FBXL17) E3 ubiquitin ligase complex, a key component of a quality control pathway required to ensure functional dimerization of BTB domain-containing proteins (dimerization quality control, DQC). FBXL17 specifically recognizes and binds a conserved degron of non-consecutive residues present at the interface of BTB dimers of aberrant composition: aberrant BTB dimer are then ubiquitinated by the SCF(FBXL17) complex and degraded by the proteasome. The ability of the SCF(FBXL17) complex to eliminate compromised BTB dimers is required for the differentiation and survival of neural crest and neuronal cells. The protein is F-box/LRR-repeat protein 17 of Xenopus laevis (African clawed frog).